Consider the following 693-residue polypeptide: Elongation factor G (693 aa).

In terms of domain architecture, tr-type G spans 8-283 (NRCRNIGIMA…AVVDYLPSPL (276 aa)). GTP-binding positions include 17–24 (AHIDAGKT), 81–85 (DTPGH), and 135–138 (NKMD).

Belongs to the TRAFAC class translation factor GTPase superfamily. Classic translation factor GTPase family. EF-G/EF-2 subfamily.

Its subcellular location is the cytoplasm. Functionally, catalyzes the GTP-dependent ribosomal translocation step during translation elongation. During this step, the ribosome changes from the pre-translocational (PRE) to the post-translocational (POST) state as the newly formed A-site-bound peptidyl-tRNA and P-site-bound deacylated tRNA move to the P and E sites, respectively. Catalyzes the coordinated movement of the two tRNA molecules, the mRNA and conformational changes in the ribosome. In Acidobacterium capsulatum (strain ATCC 51196 / DSM 11244 / BCRC 80197 / JCM 7670 / NBRC 15755 / NCIMB 13165 / 161), this protein is Elongation factor G.